The sequence spans 103 residues: Cell division suppressor protein YneA (103 aa).

In terms of domain architecture, LysM spans 36 to 87 (VKIEVQSGDTLWGLADQVNDSKSIDKNAFIDWVTQHNDLASTEIQPGDILVI).

The protein belongs to the YneA family.

It is found in the cytoplasm. Functionally, inhibits cell division during the SOS response. Affects a later stage of the cell division protein assembly, after the assembly of the Z ring, by probably suppressing recruitment of FtsL and/or DivIC to the division machinery. The polypeptide is Cell division suppressor protein YneA (Bacillus pumilus (strain SAFR-032)).